We begin with the raw amino-acid sequence, 404 residues long: ORC1-type DNA replication protein 2 (404 aa).

Residues Thr64 to Ser68, Tyr205, and Arg217 contribute to the ATP site.

The protein belongs to the CDC6/cdc18 family. Interacts with MCM.

Involved in regulation of DNA replication. Stimulates the helicase activity of MCM via stimulation of its ATPase activity. Binding to MCM may result in conformational changes in MCM, leading to catalytic ATP hydrolysis by the helicase. Directly stimulates MCM movement along single-stranded and double-stranded DNA. Does not bind DNA. The polypeptide is ORC1-type DNA replication protein 2 (cdc6-2) (Thermoplasma acidophilum (strain ATCC 25905 / DSM 1728 / JCM 9062 / NBRC 15155 / AMRC-C165)).